A 1174-amino-acid chain; its full sequence is DNA-directed RNA polymerase subunit beta (1174 aa).

Belongs to the RNA polymerase beta chain family. As to quaternary structure, the RNAP catalytic core consists of 2 alpha, 1 beta, 1 beta' and 1 omega subunit. When a sigma factor is associated with the core the holoenzyme is formed, which can initiate transcription.

The catalysed reaction is RNA(n) + a ribonucleoside 5'-triphosphate = RNA(n+1) + diphosphate. Its function is as follows. DNA-dependent RNA polymerase catalyzes the transcription of DNA into RNA using the four ribonucleoside triphosphates as substrates. This Mycolicibacterium gilvum (strain PYR-GCK) (Mycobacterium gilvum (strain PYR-GCK)) protein is DNA-directed RNA polymerase subunit beta.